Reading from the N-terminus, the 663-residue chain is Telomere length regulator taz1 (663 aa).

A disordered region spans residues 15 to 72 (ENEGDQQFDKEVVQNSDSNIETGQISDSLTKAVEERAETESSSNLSNFTTSESESSKP). Polar residues-rich tracts occupy residues 27-43 (VQNS…SDSL) and 54-67 (ESSS…TSES). Serine 332 is subject to Phosphoserine. Disordered stretches follow at residues 389–412 (GSTA…TFSE) and 471–554 (RAKS…PYEG). Basic and acidic residues-rich tracts occupy residues 489-498 (KRGDNLRREA) and 512-524 (PPVR…ESRS). Residues 556-612 (RTRRKWTDEEENELYEMISQHGCCWSKIIHIQKLENGPLKTFGPTQIKDKARLIKAR) form the Myb-like domain.

As to quaternary structure, interacts with taf1 via the Myb domain, and ccq1.

Its subcellular location is the cytoplasm. The protein resides in the nucleus. It localises to the chromosome. The protein localises to the telomere. Its function is as follows. Regulates telomere length and function. Required for the repression of telomere-adjacent gene expression and for normal meiosis or sporulation. It may be a negative regulator of the telomere-replicating enzyme, telomerase, or may protect against activation of telomerase-independent pathways of telomere elongation. It may be involved in the interactions between chromosomes and spindle proteins, disruption of these interactions would lead to defective meiosis. The protein is Telomere length regulator taz1 (taz1) of Schizosaccharomyces pombe (strain 972 / ATCC 24843) (Fission yeast).